Reading from the N-terminus, the 503-residue chain is Cytochrome P450 3A7 (503 aa).

Position 442 (Cys-442) interacts with heme.

This sequence belongs to the cytochrome P450 family. It depends on heme as a cofactor. In terms of tissue distribution, expressed in fetal liver (at protein level).

Its subcellular location is the endoplasmic reticulum membrane. The protein localises to the microsome membrane. The catalysed reaction is an organic molecule + reduced [NADPH--hemoprotein reductase] + O2 = an alcohol + oxidized [NADPH--hemoprotein reductase] + H2O + H(+). It catalyses the reaction 3beta-hydroxyandrost-5-en-17-one + reduced [NADPH--hemoprotein reductase] + O2 = 3beta,16alpha-dihydroxy-androst-5-en-17-one + oxidized [NADPH--hemoprotein reductase] + H2O + H(+). The enzyme catalyses dehydroepiandrosterone 3-sulfate + reduced [NADPH--hemoprotein reductase] + O2 = 16alpha-hydroxydehydroepiandrosterone 3-sulfate + oxidized [NADPH--hemoprotein reductase] + H2O + H(+). It carries out the reaction testosterone + reduced [NADPH--hemoprotein reductase] + O2 = 6beta,17beta-dihydroxyandrost-4-en-3-one + oxidized [NADPH--hemoprotein reductase] + H2O + H(+). The catalysed reaction is estrone + reduced [NADPH--hemoprotein reductase] + O2 = 2-hydroxyestrone + oxidized [NADPH--hemoprotein reductase] + H2O + H(+). It catalyses the reaction estrone + reduced [NADPH--hemoprotein reductase] + O2 = 4-hydroxyestrone + oxidized [NADPH--hemoprotein reductase] + H2O + H(+). The enzyme catalyses estrone + reduced [NADPH--hemoprotein reductase] + O2 = 16alpha-hydroxyestrone + oxidized [NADPH--hemoprotein reductase] + H2O + H(+). It carries out the reaction 17beta-estradiol + reduced [NADPH--hemoprotein reductase] + O2 = 2-hydroxy-17beta-estradiol + oxidized [NADPH--hemoprotein reductase] + H2O + H(+). The catalysed reaction is 17beta-estradiol + reduced [NADPH--hemoprotein reductase] + O2 = 6beta-hydroxyestradiol-17beta + oxidized [NADPH--hemoprotein reductase] + H2O + H(+). It catalyses the reaction all-trans-retinoate + reduced [NADPH--hemoprotein reductase] + O2 = all-trans-4-hydroxyretinoate + oxidized [NADPH--hemoprotein reductase] + H2O + H(+). The enzyme catalyses all-trans-retinoate + reduced [NADPH--hemoprotein reductase] + O2 = all-trans-18-hydroxyretinoate + oxidized [NADPH--hemoprotein reductase] + H2O + H(+). It participates in steroid hormone biosynthesis. Its pathway is cofactor metabolism; retinol metabolism. A cytochrome P450 monooxygenase involved in the metabolism of steroid hormones and vitamins during embryogenesis. Mechanistically, uses molecular oxygen inserting one oxygen atom into a substrate, and reducing the second into a water molecule, with two electrons provided by NADPH via cytochrome P450 reductase (NADPH--hemoprotein reductase). Catalyzes the hydroxylation of carbon-hydrogen bonds. Metabolizes 3beta-hydroxyandrost-5-en-17-one (dehydroepiandrosterone, DHEA), a precursor in the biosynthesis of androgen and estrogen steroid hormones. Exhibits high catalytic activity for the formation of hydroxyestrogens from estrone (E1), particularly D-ring hydroxylated estrone at the C16-alpha position. Mainly hydroxylates all trans-retinoic acid (atRA) to 4-hydroxyretinoate and may play a role in atRA clearance during fetal development. Also involved in the oxidative metabolism of xenobiotics including anticonvulsants. This Homo sapiens (Human) protein is Cytochrome P450 3A7.